Here is an 800-residue protein sequence, read N- to C-terminus: Probable replication endonuclease from prophage-like region (800 aa).

Catalysis depends on O-(5'-phospho-DNA)-tyrosine intermediate residues Y503 and Y507.

Belongs to the phage GPA family.

Functionally, possible endonuclease which induces a single-strand cut and initiates DNA replication. This Salmonella paratyphi A (strain ATCC 9150 / SARB42) protein is Probable replication endonuclease from prophage-like region.